The following is a 171-amino-acid chain: Lipoprotein signal peptidase (171 aa).

The next 4 membrane-spanning stretches (helical) occupy residues 15–35 (WLWL…IVMD), 47–67 (VLPF…SFLS), 72–92 (WQRW…AYWM), and 107–127 (ALII…GFVV). Catalysis depends on residues Asp128 and Asp146. A helical membrane pass occupies residues 141–161 (AFNLADSTICIGAAMIILDGF).

Belongs to the peptidase A8 family.

It localises to the cell inner membrane. It carries out the reaction Release of signal peptides from bacterial membrane prolipoproteins. Hydrolyzes -Xaa-Yaa-Zaa-|-(S,diacylglyceryl)Cys-, in which Xaa is hydrophobic (preferably Leu), and Yaa (Ala or Ser) and Zaa (Gly or Ala) have small, neutral side chains.. The protein operates within protein modification; lipoprotein biosynthesis (signal peptide cleavage). Functionally, this protein specifically catalyzes the removal of signal peptides from prolipoproteins. This Vibrio cholerae serotype O1 (strain ATCC 39541 / Classical Ogawa 395 / O395) protein is Lipoprotein signal peptidase.